Reading from the N-terminus, the 356-residue chain is Cyclin-D4-1 (356 aa).

The protein belongs to the cyclin family. Cyclin D subfamily.

The sequence is that of Cyclin-D4-1 (CYCD4-1) from Oryza sativa subsp. japonica (Rice).